The sequence spans 1052 residues: Fibroblast growth factor receptor homolog 2 (1052 aa).

Positions Met-1–Ala-19 are cleaved as a signal peptide. Topologically, residues Asp-20–Pro-600 are extracellular. 3 Ig-like C2-type domains span residues Cys-23 to Phe-117, Pro-124 to Leu-230, and Pro-240 to Ala-340. An intrachain disulfide couples Cys-30 to Cys-90. 6 N-linked (GlcNAc...) asparagine glycosylation sites follow: Asn-99, Asn-137, Asn-175, Asn-181, Asn-249, and Asn-257. A disulfide bridge links Cys-164 with Cys-217. Cysteines 262 and 329 form a disulfide. The span at Thr-358–Thr-372 shows a compositional bias: low complexity. Residues Thr-358–Pro-393 are disordered. Ig-like C2-type domains are found at residues Pro-393–Gln-478 and Pro-487–Ser-585. Cys-416 and Cys-462 are joined by a disulfide. 9 N-linked (GlcNAc...) asparagine glycosylation sites follow: Asn-423, Asn-444, Asn-494, Asn-500, Asn-526, Asn-541, Asn-546, Asn-555, and Asn-576. The cysteines at positions 507 and 566 are disulfide-linked. Residues Leu-601–Arg-626 traverse the membrane as a helical segment. The Cytoplasmic segment spans residues Arg-627–Asn-1052. Residues Leu-712–Leu-1000 form the Protein kinase domain. Residues Leu-718–Val-726 and Lys-748 contribute to the ATP site. Asp-864 serves as the catalytic Proton acceptor. At Tyr-895 the chain carries Phosphotyrosine; by autocatalysis. The disordered stretch occupies residues Pro-1017–Arg-1038.

The protein belongs to the protein kinase superfamily. Tyr protein kinase family. Fibroblast growth factor receptor subfamily. During embryogenesis, expression is seen in mesoderm, endodermal precursor cells, CNS midline cells and trachea and salivary duct ectodermal cells.

The protein localises to the membrane. The enzyme catalyses L-tyrosyl-[protein] + ATP = O-phospho-L-tyrosyl-[protein] + ADP + H(+). May be required for patterning of muscle precursor cells: generation of mesodermal and endodermal layers, invaginations of various types of cells, and CNS formation. Essential for the ability of the migrating tracheal and midline cells to recognize external guiding cues. The sequence is that of Fibroblast growth factor receptor homolog 2 (btl) from Drosophila melanogaster (Fruit fly).